Here is a 112-residue protein sequence, read N- to C-terminus: Photosystem II reaction center Psb28 protein (112 aa).

Belongs to the Psb28 family. In terms of assembly, part of the photosystem II complex.

It is found in the cellular thylakoid membrane. This chain is Photosystem II reaction center Psb28 protein, found in Microcystis aeruginosa (strain NIES-843 / IAM M-2473).